The primary structure comprises 1042 residues: Carbamoyl phosphate synthase large chain (1042 aa).

Residues Met-1–Glu-417 are carboxyphosphate synthetic domain. Positions 127, 182, 188, 189, 221, 223, 228, 254, 255, 256, 297, and 314 each coordinate ATP. An ATP-grasp 1 domain is found at Arg-131 to Leu-343. Mg(2+) contacts are provided by Gln-297, Glu-314, and Asn-316. Gln-297, Glu-314, and Asn-316 together coordinate Mn(2+). The interval Tyr-418–Arg-558 is oligomerization domain. Residues Ala-559–Ala-947 form a carbamoyl phosphate synthetic domain region. Positions Asn-689–Ala-880 constitute an ATP-grasp 2 domain. The ATP site is built by Arg-725, Glu-764, Leu-766, Glu-771, Gly-796, Val-797, His-798, Ser-799, Gln-839, and Glu-851. Positions 839, 851, and 853 each coordinate Mg(2+). Positions 839, 851, and 853 each coordinate Mn(2+). In terms of domain architecture, MGS-like spans Ala-947–Gly-1042. Residues Pro-948–Gly-1042 form an allosteric domain region.

This sequence belongs to the CarB family. Composed of two chains; the small (or glutamine) chain promotes the hydrolysis of glutamine to ammonia, which is used by the large (or ammonia) chain to synthesize carbamoyl phosphate. Tetramer of heterodimers (alpha,beta)4. Requires Mg(2+) as cofactor. Mn(2+) serves as cofactor.

The catalysed reaction is hydrogencarbonate + L-glutamine + 2 ATP + H2O = carbamoyl phosphate + L-glutamate + 2 ADP + phosphate + 2 H(+). It catalyses the reaction hydrogencarbonate + NH4(+) + 2 ATP = carbamoyl phosphate + 2 ADP + phosphate + 2 H(+). It participates in amino-acid biosynthesis; L-arginine biosynthesis; carbamoyl phosphate from bicarbonate: step 1/1. It functions in the pathway pyrimidine metabolism; UMP biosynthesis via de novo pathway; (S)-dihydroorotate from bicarbonate: step 1/3. Its function is as follows. Large subunit of the glutamine-dependent carbamoyl phosphate synthetase (CPSase). CPSase catalyzes the formation of carbamoyl phosphate from the ammonia moiety of glutamine, carbonate, and phosphate donated by ATP, constituting the first step of 2 biosynthetic pathways, one leading to arginine and/or urea and the other to pyrimidine nucleotides. The large subunit (synthetase) binds the substrates ammonia (free or transferred from glutamine from the small subunit), hydrogencarbonate and ATP and carries out an ATP-coupled ligase reaction, activating hydrogencarbonate by forming carboxy phosphate which reacts with ammonia to form carbamoyl phosphate. The sequence is that of Carbamoyl phosphate synthase large chain from Halobacterium salinarum (strain ATCC 700922 / JCM 11081 / NRC-1) (Halobacterium halobium).